A 495-amino-acid polypeptide reads, in one-letter code: WD repeat-containing protein 37 (495 aa).

Positions 1–34 are disordered; that stretch reads MPTESGSWAAARQTKQKRKSHSLSIKRTNSSEQD. Residues 22–31 show a composition bias toward polar residues; the sequence is SLSIKRTNSS. 2 WD repeats span residues 154–194 and 197–236; these read GHRD…CLIK and GHAG…PTPQ. Residues 237–268 form a disordered region; that stretch reads PMADTSQISGEEEVDFSDKDENDGDGDASSDC. Over residues 246 to 264 the composition is skewed to acidic residues; that stretch reads GEEEVDFSDKDENDGDGDA. WD repeat units follow at residues 280 to 319, 322 to 361, 366 to 404, 407 to 446, and 453 to 494; these read SHQG…LVHS, GHDQ…IHSV, GHTD…SPIA, RTDS…LARL, and GHRR…LLQE.

It localises to the cytoplasm. The protein localises to the nucleus. In Xenopus laevis (African clawed frog), this protein is WD repeat-containing protein 37 (wdr37).